A 401-amino-acid polypeptide reads, in one-letter code: Argininosuccinate synthase (401 aa).

Ala8–Ser16 serves as a coordination point for ATP. Tyr87 is an L-citrulline binding site. An ATP-binding site is contributed by Gly117. L-aspartate contacts are provided by Thr119, Asn123, and Asp124. Asn123 contacts L-citrulline. Residues Arg127, Ser175, Glu259, and Tyr271 each contribute to the L-citrulline site.

Belongs to the argininosuccinate synthase family. Type 1 subfamily. In terms of assembly, homotetramer.

It localises to the cytoplasm. It catalyses the reaction L-citrulline + L-aspartate + ATP = 2-(N(omega)-L-arginino)succinate + AMP + diphosphate + H(+). It functions in the pathway amino-acid biosynthesis; L-arginine biosynthesis; L-arginine from L-ornithine and carbamoyl phosphate: step 2/3. The sequence is that of Argininosuccinate synthase from Corynebacterium efficiens (strain DSM 44549 / YS-314 / AJ 12310 / JCM 11189 / NBRC 100395).